Reading from the N-terminus, the 425-residue chain is Serine--tRNA ligase (425 aa).

An L-serine-binding site is contributed by 232 to 234 (TAE). ATP contacts are provided by residues 263 to 265 (RRE) and valine 279. An L-serine-binding site is contributed by glutamate 286. 350-353 (EVVS) is a binding site for ATP. Threonine 387 contributes to the L-serine binding site.

The protein belongs to the class-II aminoacyl-tRNA synthetase family. Type-1 seryl-tRNA synthetase subfamily. In terms of assembly, homodimer. The tRNA molecule binds across the dimer.

It localises to the cytoplasm. It carries out the reaction tRNA(Ser) + L-serine + ATP = L-seryl-tRNA(Ser) + AMP + diphosphate + H(+). The enzyme catalyses tRNA(Sec) + L-serine + ATP = L-seryl-tRNA(Sec) + AMP + diphosphate + H(+). Its pathway is aminoacyl-tRNA biosynthesis; selenocysteinyl-tRNA(Sec) biosynthesis; L-seryl-tRNA(Sec) from L-serine and tRNA(Sec): step 1/1. Functionally, catalyzes the attachment of serine to tRNA(Ser). Is also able to aminoacylate tRNA(Sec) with serine, to form the misacylated tRNA L-seryl-tRNA(Sec), which will be further converted into selenocysteinyl-tRNA(Sec). The polypeptide is Serine--tRNA ligase (Methanocorpusculum labreanum (strain ATCC 43576 / DSM 4855 / Z)).